The sequence spans 381 residues: E3 ubiquitin-protein ligase KCMF1 (381 aa).

S2 carries the post-translational modification N-acetylserine. The residue at position 2 (S2) is a Phosphoserine. The ZZ-type zinc-finger motif lies at 4–60 (HEGVSCDACLKGNFRGRRYKCLICYDYDLCASCYESGATTTRHTTDHPMQCILTRVD). Zn(2+) is bound by residues C9, C12, C24, C27, C33, C36, H46, and H50. A C2H2-type zinc finger spans residues 78–101 (FTCPYCGKMGYTETSLQEHVTSEH). The disordered stretch occupies residues 154–193 (MFHPGRGLGGPRARRSNMHFTSSSTGGLSSSQSSYSPSNR). Phosphoserine is present on residues S169, S189, and S212. Residues 175-191 (SSSTGGLSSSQSSYSPS) show a composition bias toward low complexity. A coiled-coil region spans residues 225-257 (SQLQQLQMQLQLERQHAQAARQQLETARNATRR). The interval 294–314 (TRLNDPKMSETERQSMESERA) is disordered. The segment covering 297–314 (NDPKMSETERQSMESERA) has biased composition (basic and acidic residues). 2 positions are modified to phosphoserine: S335 and S336.

The protein belongs to the KCMF1 family. In terms of assembly, component of the SIFI complex, composed of KCMF1, UBR4 and calmodulin (CALM1, CALM2 or CALM3). In terms of tissue distribution, spleen, small intestine, ovary, peripheral blood, lung, kidney and pancreas. Expressed at low levels in the thymus, prostate, testis, colon, heart, brain, placenta and liver.

It localises to the cytoplasm. The protein localises to the late endosome. It is found in the lysosome. It catalyses the reaction S-ubiquitinyl-[E2 ubiquitin-conjugating enzyme]-L-cysteine + [acceptor protein]-L-lysine = [E2 ubiquitin-conjugating enzyme]-L-cysteine + N(6)-ubiquitinyl-[acceptor protein]-L-lysine.. The protein operates within protein modification; protein ubiquitination. Functionally, E3 ubiquitin-protein ligase which accepts ubiquitin from an E2 ubiquitin-conjugating enzyme and then transfers it to targeted substrates, promoting their degradation by the proteasome. Together with UBR4, component of the N-end rule pathway: ubiquitinates proteins bearing specific N-terminal residues that are destabilizing according to the N-end rule, leading to their degradation. Does not ubiquitinate proteins that are acetylated at the N-terminus. Together with UBR4, part of a protein quality control pathway that catalyzes ubiquitination and degradation of proteins that have been oxidized in response to reactive oxygen species (ROS): recognizes proteins with an Arg-CysO3(H) degron at the N-terminus, and mediates assembly of heterotypic 'Lys-63'-/'Lys-27'-linked branched ubiquitin chains on oxidized proteins, leading to their degradation by autophagy. Catalytic component of the SIFI complex, a multiprotein complex required to inhibit the mitochondrial stress response after a specific stress event has been resolved: ubiquitinates and degrades (1) components of the HRI-mediated signaling of the integrated stress response, such as DELE1 and EIF2AK1/HRI, as well as (2) unimported mitochondrial precursors. Within the SIFI complex, UBR4 initiates ubiquitin chain that are further elongated or branched by KCMF1. This is E3 ubiquitin-protein ligase KCMF1 from Homo sapiens (Human).